Reading from the N-terminus, the 320-residue chain is Glyoxylate/hydroxypyruvate reductase B (320 aa).

Catalysis depends on residues Arg233 and Glu262. The active-site Proton donor is His281.

This sequence belongs to the D-isomer specific 2-hydroxyacid dehydrogenase family. GhrB subfamily. In terms of assembly, homodimer.

The protein resides in the cytoplasm. The catalysed reaction is glycolate + NADP(+) = glyoxylate + NADPH + H(+). It catalyses the reaction (R)-glycerate + NAD(+) = 3-hydroxypyruvate + NADH + H(+). The enzyme catalyses (R)-glycerate + NADP(+) = 3-hydroxypyruvate + NADPH + H(+). Its function is as follows. Catalyzes the NADPH-dependent reduction of glyoxylate and hydroxypyruvate into glycolate and glycerate, respectively. This is Glyoxylate/hydroxypyruvate reductase B from Pectobacterium atrosepticum (strain SCRI 1043 / ATCC BAA-672) (Erwinia carotovora subsp. atroseptica).